Here is a 122-residue protein sequence, read N- to C-terminus: Holo-[acyl-carrier-protein] synthase (122 aa).

Mg(2+) is bound by residues Asp9 and Glu58.

This sequence belongs to the P-Pant transferase superfamily. AcpS family. It depends on Mg(2+) as a cofactor.

The protein localises to the cytoplasm. The catalysed reaction is apo-[ACP] + CoA = holo-[ACP] + adenosine 3',5'-bisphosphate + H(+). Transfers the 4'-phosphopantetheine moiety from coenzyme A to a Ser of acyl-carrier-protein. This is Holo-[acyl-carrier-protein] synthase from Chlamydia pneumoniae (Chlamydophila pneumoniae).